A 247-amino-acid polypeptide reads, in one-letter code: Chymase (247 aa).

The N-terminal stretch at 1 to 19 is a signal peptide; it reads MHLLTLHLLLLLLGSSTKA. Residues 20 to 21 constitute a propeptide, activation peptide; it reads GE. The Peptidase S1 domain maps to 22–245; it reads IIGGTECIPH…YRPWINKILR (224 aa). C51 and C67 form a disulfide bridge. Residue H66 is the Charge relay system of the active site. An N-linked (GlcNAc...) asparagine glycan is attached at N80. D110 functions as the Charge relay system in the catalytic mechanism. 2 cysteine pairs are disulfide-bonded: C144–C209 and C175–C188. Residue S203 is the Charge relay system of the active site.

It belongs to the peptidase S1 family. Granzyme subfamily. Mast cells.

It localises to the secreted. The protein localises to the cytoplasmic granule. It carries out the reaction Preferential cleavage: Phe-|-Xaa &gt; Tyr-|-Xaa &gt; Trp-|-Xaa &gt; Leu-|-Xaa.. In terms of biological role, major secreted protease of mast cells with suspected roles in vasoactive peptide generation, extracellular matrix degradation, and regulation of gland secretion. This is Chymase (Cma1) from Mus musculus (Mouse).